Reading from the N-terminus, the 432-residue chain is 3-phosphoshikimate 1-carboxyvinyltransferase (432 aa).

Residues Lys-22, Ser-23, and Arg-27 each contribute to the 3-phosphoshikimate site. Lys-22 lines the phosphoenolpyruvate pocket. Phosphoenolpyruvate-binding residues include Gly-96 and Arg-127. Residues Ser-173, Ser-174, Gln-175, Ser-201, Asp-316, Asn-339, and Lys-343 each contribute to the 3-phosphoshikimate site. Gln-175 serves as a coordination point for phosphoenolpyruvate. Asp-316 functions as the Proton acceptor in the catalytic mechanism. The phosphoenolpyruvate site is built by Arg-347, Arg-391, and Lys-416.

It belongs to the EPSP synthase family. In terms of assembly, monomer.

It localises to the cytoplasm. The enzyme catalyses 3-phosphoshikimate + phosphoenolpyruvate = 5-O-(1-carboxyvinyl)-3-phosphoshikimate + phosphate. It participates in metabolic intermediate biosynthesis; chorismate biosynthesis; chorismate from D-erythrose 4-phosphate and phosphoenolpyruvate: step 6/7. In terms of biological role, catalyzes the transfer of the enolpyruvyl moiety of phosphoenolpyruvate (PEP) to the 5-hydroxyl of shikimate-3-phosphate (S3P) to produce enolpyruvyl shikimate-3-phosphate and inorganic phosphate. The protein is 3-phosphoshikimate 1-carboxyvinyltransferase of Actinobacillus pleuropneumoniae serotype 7 (strain AP76).